A 126-amino-acid chain; its full sequence is Holo-[acyl-carrier-protein] synthase (126 aa).

Residues Asp-8 and Glu-57 each coordinate Mg(2+).

It belongs to the P-Pant transferase superfamily. AcpS family. Mg(2+) is required as a cofactor.

It is found in the cytoplasm. The enzyme catalyses apo-[ACP] + CoA = holo-[ACP] + adenosine 3',5'-bisphosphate + H(+). Transfers the 4'-phosphopantetheine moiety from coenzyme A to a Ser of acyl-carrier-protein. The protein is Holo-[acyl-carrier-protein] synthase of Trichlorobacter lovleyi (strain ATCC BAA-1151 / DSM 17278 / SZ) (Geobacter lovleyi).